We begin with the raw amino-acid sequence, 646 residues long: Peptidylprolyl isomerase domain and WD repeat-containing protein 1 (646 aa).

A disordered region spans residues 1 to 30 (MAAESGSDFQQRRRRRRDPEEPEKTELSER). N-acetylalanine is present on A2. Basic and acidic residues predominate over residues 17-30 (RDPEEPEKTELSER). 7 WD repeats span residues 80–118 (ASMY…FWKK), 124–162 (EFVK…VFDV), 168–208 (INML…IYDG), 213–252 (QPLH…YWTG), 271–309 (TDLY…IFRF), 345–386 (AVER…VETN), and 401–453 (MQLA…MFTK). Positions 455–478 (EPEDTKSADSDRDVFNEKPSKEEV) are enriched in basic and acidic residues. The disordered stretch occupies residues 455-490 (EPEDTKSADSDRDVFNEKPSKEEVMAATQAEGPKRV). A PPIase cyclophilin-type domain is found at 490 to 645 (VSDSAIIHTS…EDVSIINITV (156 aa)).

It belongs to the cyclophilin-type PPIase family. PPIL1 subfamily. As to quaternary structure, identified in the spliceosome C complex.

The protein localises to the nucleus. The enzyme catalyses [protein]-peptidylproline (omega=180) = [protein]-peptidylproline (omega=0). With respect to regulation, inhibited by cyclosporin A (CsA). Functionally, PPIase that catalyzes the cis-trans isomerization of proline imidic peptide bonds in oligopeptides and may therefore assist protein folding. May be involved in pre-mRNA splicing. This is Peptidylprolyl isomerase domain and WD repeat-containing protein 1 from Homo sapiens (Human).